A 610-amino-acid polypeptide reads, in one-letter code: Elongation factor 4 (610 aa).

Residues 13–195 (SHIRNFSIVA…AIVHKLPAPK (183 aa)) enclose the tr-type G domain. GTP is bound by residues 25-30 (DHGKST) and 142-145 (NKID).

The protein belongs to the TRAFAC class translation factor GTPase superfamily. Classic translation factor GTPase family. LepA subfamily.

It localises to the cell inner membrane. It carries out the reaction GTP + H2O = GDP + phosphate + H(+). In terms of biological role, required for accurate and efficient protein synthesis under certain stress conditions. May act as a fidelity factor of the translation reaction, by catalyzing a one-codon backward translocation of tRNAs on improperly translocated ribosomes. Back-translocation proceeds from a post-translocation (POST) complex to a pre-translocation (PRE) complex, thus giving elongation factor G a second chance to translocate the tRNAs correctly. Binds to ribosomes in a GTP-dependent manner. This Rhizobium etli (strain ATCC 51251 / DSM 11541 / JCM 21823 / NBRC 15573 / CFN 42) protein is Elongation factor 4.